We begin with the raw amino-acid sequence, 565 residues long: Urocanate hydratase (565 aa).

NAD(+) is bound by residues 58–59, glutamine 136, 182–184, glutamate 202, arginine 207, 245–246, 266–270, 276–277, and tyrosine 325; these read GG, GMG, NA, QTSAH, and YL. Cysteine 413 is a catalytic residue. Glycine 495 contacts NAD(+).

Belongs to the urocanase family. NAD(+) serves as cofactor.

Its subcellular location is the cytoplasm. The enzyme catalyses 4-imidazolone-5-propanoate = trans-urocanate + H2O. The protein operates within amino-acid degradation; L-histidine degradation into L-glutamate; N-formimidoyl-L-glutamate from L-histidine: step 2/3. In terms of biological role, catalyzes the conversion of urocanate to 4-imidazolone-5-propionate. The sequence is that of Urocanate hydratase from Vibrio vulnificus (strain YJ016).